The chain runs to 141 residues: Hemoglobin subunit alpha (141 aa).

Residues 1 to 141 (VLSAADKTNV…VSTVLTSKYR (141 aa)) form the Globin domain. At serine 3 the chain carries Phosphoserine. Residue lysine 7 is modified to N6-succinyllysine. Threonine 8 is modified (phosphothreonine). The residue at position 11 (lysine 11) is an N6-succinyllysine. N6-acetyllysine; alternate is present on lysine 16. N6-succinyllysine; alternate is present on lysine 16. At tyrosine 24 the chain carries Phosphotyrosine. Serine 35 is subject to Phosphoserine. Lysine 40 is subject to N6-succinyllysine. Phosphoserine is present on serine 49. Histidine 58 contacts O2. Histidine 87 lines the heme b pocket. Position 102 is a phosphoserine (serine 102). Threonine 108 is modified (phosphothreonine). Residues serine 124 and serine 131 each carry the phosphoserine modification. Threonine 134 and threonine 137 each carry phosphothreonine. Serine 138 carries the post-translational modification Phosphoserine.

The protein belongs to the globin family. As to quaternary structure, heterotetramer of two alpha chains and two beta chains. As to expression, red blood cells.

Functionally, involved in oxygen transport from the lung to the various peripheral tissues. The chain is Hemoglobin subunit alpha from Tamiasciurus hudsonicus (American red squirrel).